Here is a 309-residue protein sequence, read N- to C-terminus: Gamma-hemolysin component A (309 aa).

A signal peptide spans 1-29 (MIKNKILTATLAVGLIAPLANPFIEISKA).

The protein belongs to the aerolysin family. As to quaternary structure, toxicity requires sequential binding and synergistic association of a class S and a class F component which form heterooligomeric complexes. HlgA (class S) associates with HlgB (class F) thus forming an AB toxin in strains producing both gamma-hemolysins and leukocidins. HlgA and LukF-PV can also form a complex.

It is found in the secreted. Its function is as follows. Toxin that seems to act by forming pores in the membrane of the cell. Has a hemolytic and a leucotoxic activity. The chain is Gamma-hemolysin component A (hlgA) from Staphylococcus aureus (strain MRSA252).